The sequence spans 120 residues: Ribosome-binding factor A (120 aa).

This sequence belongs to the RbfA family. As to quaternary structure, monomer. Binds 30S ribosomal subunits, but not 50S ribosomal subunits or 70S ribosomes.

It localises to the cytoplasm. One of several proteins that assist in the late maturation steps of the functional core of the 30S ribosomal subunit. Associates with free 30S ribosomal subunits (but not with 30S subunits that are part of 70S ribosomes or polysomes). Required for efficient processing of 16S rRNA. May interact with the 5'-terminal helix region of 16S rRNA. The protein is Ribosome-binding factor A of Campylobacter jejuni subsp. jejuni serotype O:6 (strain 81116 / NCTC 11828).